Reading from the N-terminus, the 148-residue chain is UPF0756 membrane protein Ent638_1667 (148 aa).

4 helical membrane passes run 14-34, 51-71, 86-106, and 121-141; these read ALGF…LIIV, LTIG…SGTL, LIAI…VTLM, and VLGV…AGLV.

This sequence belongs to the UPF0756 family.

The protein localises to the cell membrane. The polypeptide is UPF0756 membrane protein Ent638_1667 (Enterobacter sp. (strain 638)).